A 169-amino-acid polypeptide reads, in one-letter code: NAD(P)H-quinone oxidoreductase subunit J, chloroplastic (169 aa).

This sequence belongs to the complex I 30 kDa subunit family. In terms of assembly, NDH is composed of at least 16 different subunits, 5 of which are encoded in the nucleus.

It localises to the plastid. The protein localises to the chloroplast thylakoid membrane. It catalyses the reaction a plastoquinone + NADH + (n+1) H(+)(in) = a plastoquinol + NAD(+) + n H(+)(out). The enzyme catalyses a plastoquinone + NADPH + (n+1) H(+)(in) = a plastoquinol + NADP(+) + n H(+)(out). In terms of biological role, NDH shuttles electrons from NAD(P)H:plastoquinone, via FMN and iron-sulfur (Fe-S) centers, to quinones in the photosynthetic chain and possibly in a chloroplast respiratory chain. The immediate electron acceptor for the enzyme in this species is believed to be plastoquinone. Couples the redox reaction to proton translocation, and thus conserves the redox energy in a proton gradient. This chain is NAD(P)H-quinone oxidoreductase subunit J, chloroplastic, found in Staurastrum punctulatum (Green alga).